The sequence spans 611 residues: Phosphatidylinositol 3,4,5-trisphosphate 3-phosphatase and protein-tyrosine-phosphatase PTEN2A (611 aa).

Disordered regions lie at residues 1 to 42 (MSSE…GVAS) and 87 to 109 (GIRLSPKSPQTNDTTTEGTSSAT). Ser-91 bears the Phosphoserine mark. Low complexity predominate over residues 100 to 109 (TTTEGTSSAT). A Phosphatase tensin-type domain is found at 145 to 324 (RRYQEGGFDL…KYFERILTYF (180 aa)). The active-site Phosphocysteine intermediate is Cys-263. Residues 331 to 458 (GRRCMLRGFR…FMVEVVLADI (128 aa)) form the C2 tensin-type domain. A compositionally biased stretch (polar residues) spans 462-486 (IPTNPSSETASKTPEETSAANSSPV). The interval 462-589 (IPTNPSSETA…VNASSSSESE (128 aa)) is disordered. The span at 495 to 507 (PDKETENPDKDDV) shows a compositional bias: basic and acidic residues. At Ser-509 the chain carries Phosphoserine. Composition is skewed to polar residues over residues 514-530 (DSTGPTKTTSSASSQTP) and 549-565 (VSISGNKGSSQPVQGVT).

This sequence belongs to the PTEN phosphatase protein family. As to expression, expressed in seedlings, roots, stems, leaves, flowers and siliques. However, at protein level, not observed in older leaves and mature siliques.

It carries out the reaction O-phospho-L-tyrosyl-[protein] + H2O = L-tyrosyl-[protein] + phosphate. The catalysed reaction is a 1,2-diacyl-sn-glycero-3-phospho-(1D-myo-inositol-3,4,5-trisphosphate) + H2O = a 1,2-diacyl-sn-glycero-3-phospho-(1D-myo-inositol-4,5-bisphosphate) + phosphate. Its function is as follows. Binds phosphatidic acid. Protein tyrosine phosphatase that also exhibits lipid phosphatase activity. Hydrolyzed poorly p-nitrophenyl phosphate (p-NPP). Can use PtdIns isomers as substrates. Removes efficiently phosphate from the D3 position of the inositol ring, less from the D4 position and not at all from the D5 position on monophosphorylated PtdIns isomers (PIPs). The presence of a phosphate group in the D5 position on PIP(2) isomers reduces lipid phosphatase activity. Mostly active on PtdIns(3)P and PtdIns(3,4)P(2), to a lower extent, on PtdIns(4)P and PtdIns(3,5)P(2), but barely against PtdIns(3,4,5)P(3) as substrate. In Arabidopsis thaliana (Mouse-ear cress), this protein is Phosphatidylinositol 3,4,5-trisphosphate 3-phosphatase and protein-tyrosine-phosphatase PTEN2A.